Consider the following 284-residue polypeptide: MNNIGIAINPSKDVDNRILNMVVKKFKEKFNLKNIEVFNSFDIEEQNLADIDLLIVLGGDGTLLGIARSLNDSFNSPILGINIGNLGFLSSVDISDIDIALEKLKDGKYKFVDRMMLNCKVESDENKEELKALNDVVLARGTLSRMVKFTIFVDGKIYSTFKGDGLIIATPTGSTAYSFSAGGPFIYPDLELITITPICPHTKSMQTIVLKGDSVIDIYADHEEEKIYLTVDGQKAIKINHETSVKVSKNKKSVKLLVFDDYDYFKVLRSKILNNSKECDGEKL.

The Proton acceptor role is filled by aspartate 60. NAD(+) is bound by residues 60 to 61, 134 to 135, arginine 145, lysine 162, aspartate 164, 175 to 180, and glutamine 234; these read DG, ND, and TAYSFS.

The protein belongs to the NAD kinase family. A divalent metal cation serves as cofactor.

It is found in the cytoplasm. It catalyses the reaction NAD(+) + ATP = ADP + NADP(+) + H(+). Involved in the regulation of the intracellular balance of NAD and NADP, and is a key enzyme in the biosynthesis of NADP. Catalyzes specifically the phosphorylation on 2'-hydroxyl of the adenosine moiety of NAD to yield NADP. This is NAD kinase from Clostridium beijerinckii (strain ATCC 51743 / NCIMB 8052) (Clostridium acetobutylicum).